A 109-amino-acid chain; its full sequence is Hainantoxin-XVIII-2 (109 aa).

The N-terminal stretch at 1–18 (MKLSIIIIATSLVIAVVA) is a signal peptide. The propeptide occupies 19-46 (FPSKDSKAIENDKTEQRMEIVVQETARA). 3 disulfides stabilise this stretch: C47–C62, C59–C108, and C61–C81.

This sequence belongs to the neurotoxin 25 family. F7 subfamily. As to expression, expressed by the venom gland.

Its subcellular location is the secreted. Putative ion channel inhibitor. The polypeptide is Hainantoxin-XVIII-2 (Cyriopagopus hainanus (Chinese bird spider)).